We begin with the raw amino-acid sequence, 838 residues long: Transient receptor potential cation channel subfamily V member 1 (838 aa).

Disordered regions lie at residues 1–63 (MEQR…PLDC) and 86–109 (RPGD…EKPP). Residues 1 to 432 (MEQRASLDSE…QDKWDRFVKR (432 aa)) are Cytoplasmic-facing. One copy of the ANK 1 repeat lies at 110 to 138 (RLYDRRSIFDAVAQSNCQELESLLPFLQR). ATP is bound at residue R115. Phosphoserine; by PKA and PKD is present on S116. T144 is modified (phosphothreonine; by PKA; in vitro). An ANK 2 repeat occupies 153–185 (TGKTCLLKAMLNLHNGQNDTIALLLDVARKTDS). ATP contacts are provided by residues K155, K160, N164, 199-202 (YKGQ), and 210-211 (ER). ANK repeat units lie at residues 203 to 228 (TALH…ADVQ), 249 to 276 (ELPL…QPAD), 285 to 321 (NTVL…KLHP), and 335 to 358 (TPLA…REIH). T370 bears the Phosphothreonine; by PKA; in vitro mark. An ANK 7 repeat occupies 393-415 (NSVLEVIAYSSSETPNRHDMLLV). The helical transmembrane segment at 433-453 (IFYFNFFVYCLYMIIFTAAAY) threads the bilayer. Topologically, residues 454–471 (YRPVEGLPPYKLKNTVGD) are extracellular. Residues 472–497 (YFRVTGEILSVSGGVYFFFRGIQYFL) traverse the membrane as a helical segment. The Cytoplasmic segment spans residues 498–510 (QRRPSLKSLFVDS). Position 502 is a phosphoserine; by PKC/PRKCE (S502). A resiniferatoxin-binding site is contributed by 511 to 512 (YS). A helical transmembrane segment spans residues 511 to 531 (YSEILFFVQSLFMLVSVVLYF). The Extracellular portion of the chain corresponds to 532–535 (SQRK). Residues 536-556 (EYVASMVFSLAMGWTNMLYYT) form a helical membrane-spanning segment. Resiniferatoxin contacts are provided by T550 and R557. Topologically, residues 557 to 571 (RGFQQMGIYAVMIEK) are cytoplasmic. Residues 572–599 (MILRDLCRFMFVYLVFLFGFSTAVVTLI) traverse the membrane as a helical segment. Residues 600–626 (EDGKNNSLPMESTPHKCRGSACKPGNS) are Extracellular-facing. Residue N604 is glycosylated (N-linked (GlcNAc...) asparagine). Residues 627–649 (YNSLYSTCLELFKFTIGMGDLEF) constitute an intramembrane region (pore-forming). G643 contributes to the Na(+) binding site. The short motif at 643-646 (GMGD) is the Selectivity filter element. D646 contacts Ca(2+). The Extracellular portion of the chain corresponds to 650-657 (TENYDFKA). Residues 658–686 (VFIILLLAYVILTYILLLNMLIALMGETV) form a helical membrane-spanning segment. Positions 684-712 (ETVNKIAQESKNIWKLQRAITILDTEKSF) are AD. Residues 687–838 (NKIAQESKNI…FKDSMVPGEK (152 aa)) lie on the Cytoplasmic side of the membrane. T704 is modified (phosphothreonine). The interaction with calmodulin stretch occupies residues 767–801 (EGVKRTLSFSLRSGRVSGRNWKNFALVPLLRDAST). The residue at position 774 (S774) is a Phosphoserine; by PKA; in vitro. Residues 777–792 (LRSGRVSGRNWKNFAL) are required for PIP2-mediated channel inhibition. Position 800 is a phosphoserine; by PKC/PRKCE and PKC/PRKCZ (S800). Phosphoserine; by PKA; in vitro is present on S820.

Belongs to the transient receptor (TC 1.A.4) family. TrpV subfamily. TRPV1 sub-subfamily. In terms of assembly, homotetramer. Interacts with PIRT. May also form a heteromeric channel with TRPV3. Interacts with CALM, PRKCM and CSK. Interacts with PRKCG and NTRK1, probably by forming a trimeric complex. Interacts with the Scolopendra mutilans RhTx toxin. Interacts with the spider Tau-theraphotoxin-Hs1a. Interacts with TMEM100. Interacts with PACS2. Phosphorylation by PKA reverses capsaicin-induced dephosphorylation at multiple sites, probably including Ser-116 as a major phosphorylation site. Phosphorylation by CAMKII seems to regulate binding to vanilloids. Phosphorylated and modulated by PRKCE, PRKCM and probably PRKCZ. Dephosphorylation by calcineurin seems to lead to receptor desensitization and phosphorylation by CAMKII recovers activity. As to expression, predominantly expressed in trigeminal and dorsal root sensory ganglia. Expressed also in hippocampus, cortex, cerebellum, olfactory bulb, mesencephalon and hindbrain. High expression in the cell bodies and dendrites of neurons in the hippocampus and in the cortex. In the brain detected also in astrocytes and pericytes (at protein level). Isoform 1 and isoform 3 are expressed in brain and peripheral blood mononuclear cells.

The protein resides in the postsynaptic cell membrane. The protein localises to the cell projection. It is found in the dendritic spine membrane. It localises to the cell membrane. The catalysed reaction is Ca(2+)(in) = Ca(2+)(out). It catalyses the reaction Mg(2+)(in) = Mg(2+)(out). It carries out the reaction Na(+)(in) = Na(+)(out). The enzyme catalyses K(+)(in) = K(+)(out). With respect to regulation, channel activity is activated via the interaction with PIRT and phosphatidylinositol 4,5-bisphosphate (PIP2). Both PIRT and PIP2 are required to activate channel activity. The channel is sensitized by ATP binding. Repeated stimulation with capsaicin gives rise to progressively smaller responses, due to desensitization. This desensitization is triggered by the influx of calcium ions and is inhibited by elevated ATP levels. Ca(2+) and CALM displace ATP from its binding site and trigger a conformation change that leads to a closed, desensitized channel. Intracellular PIP2 inhibits desensitization. The double-knot toxin (DkTx) from the Chinese earth tiger tarantula activates the channel and traps it in an open conformation. The Scolopendra mutilans RhTx toxin potentiates the heat activation pathway mediated by this channel by binding to the charge-rich outer pore region (in an activated state). In terms of biological role, non-selective calcium permeant cation channel involved in detection of noxious chemical and thermal stimuli. Seems to mediate proton influx and may be involved in intracellular acidosis in nociceptive neurons. Involved in mediation of inflammatory pain and hyperalgesia. Sensitized by a phosphatidylinositol second messenger system activated by receptor tyrosine kinases, which involves PKC isozymes and PCL. Activation by vanilloids, like capsaicin, and temperatures higher than 42 degrees Celsius. Upon activation, exhibits a time- and Ca(2+)-dependent outward rectification, followed by a long-lasting refractory state. Mild extracellular acidic pH (6.5) potentiates channel activation by noxious heat and vanilloids, whereas acidic conditions (pH &lt;6) directly activate the channel. Can be activated by endogenous compounds, including 12-hydroperoxytetraenoic acid and bradykinin. Acts as ionotropic endocannabinoid receptor with central neuromodulatory effects. Triggers a form of long-term depression (TRPV1-LTD) mediated by the endocannabinoid anandamine in the hippocampus and nucleus accumbens by affecting AMPA receptors endocytosis. Its function is as follows. Does not display channel activity in response to noxious chemical compounds, such as capsaicin and the vanilloid resiniferatoxin. Channel activity is not elicited by mildly acidic extracellular pH, and only slight channel activity is observed in response to noxiuos heat stimuli. The polypeptide is Transient receptor potential cation channel subfamily V member 1 (Trpv1) (Rattus norvegicus (Rat)).